A 137-amino-acid chain; its full sequence is Small heat shock protein IbpA (137 aa).

The sHSP domain maps to 28–137 (SQSNGGYPPY…ANKPRRIEIN (110 aa)).

The protein belongs to the small heat shock protein (HSP20) family. Monomer. Forms homomultimers of about 100-150 subunits at optimal growth temperatures. Conformation changes to monomers at high temperatures or high ionic concentrations.

It localises to the cytoplasm. Its function is as follows. Associates with aggregated proteins, together with IbpB, to stabilize and protect them from irreversible denaturation and extensive proteolysis during heat shock and oxidative stress. Aggregated proteins bound to the IbpAB complex are more efficiently refolded and reactivated by the ATP-dependent chaperone systems ClpB and DnaK/DnaJ/GrpE. Its activity is ATP-independent. The protein is Small heat shock protein IbpA of Citrobacter koseri (strain ATCC BAA-895 / CDC 4225-83 / SGSC4696).